Reading from the N-terminus, the 126-residue chain is Glycine cleavage system H protein (126 aa).

The Lipoyl-binding domain occupies 22–104 (VAIIGITEYA…YEKAWMVKVE (83 aa)). Lys-63 is subject to N6-lipoyllysine.

This sequence belongs to the GcvH family. As to quaternary structure, the glycine cleavage system is composed of four proteins: P, T, L and H. The cofactor is (R)-lipoate.

In terms of biological role, the glycine cleavage system catalyzes the degradation of glycine. The H protein shuttles the methylamine group of glycine from the P protein to the T protein. Is also involved in protein lipoylation via its role as an octanoyl/lipoyl carrier protein intermediate. In Staphylococcus aureus (strain USA300), this protein is Glycine cleavage system H protein.